A 318-amino-acid polypeptide reads, in one-letter code: Mediator of RNA polymerase II transcription subunit 30 (318 aa).

Residues 1 to 13 are compositionally biased toward low complexity; that stretch reads MWKYGQNQGNQGP. 2 disordered regions span residues 1-92 and 120-142; these read MWKY…QQQQ and GGGVVPQQQQQQPQQNMPQQNIP. The segment covering 14 to 33 has biased composition (gly residues); that stretch reads SSGGGGGGGPNMMPMGGFGM. 3 stretches are compositionally biased toward low complexity: residues 34–55, 78–92, and 124–142; these read QHGNMQQMHMSPQHQQQQQQMG, PGMSPQHQMQQQQQQ, and VPQQQQQQPQQNMPQQNIP.

The protein belongs to the Mediator complex subunit 30 family. In terms of assembly, component of the Mediator complex, which includes at least CDK8, MED4, MED6, MED11, MED14, MED17, MED18, MED20, MED21, MED22, MED27, MED28, MED30 and MED31.

Its subcellular location is the nucleus. Functionally, component of the Mediator complex, a coactivator involved in the regulated transcription of nearly all RNA polymerase II-dependent genes. Mediator functions as a bridge to convey information from gene-specific regulatory proteins to the basal RNA polymerase II transcription machinery. Mediator is recruited to promoters by direct interactions with regulatory proteins and serves as a scaffold for the assembly of a functional preinitiation complex with RNA polymerase II and the general transcription factors. The protein is Mediator of RNA polymerase II transcription subunit 30 (MED30) of Drosophila melanogaster (Fruit fly).